The chain runs to 425 residues: Glutamyl-tRNA reductase (425 aa).

Substrate-binding positions include 49–52 (TCNR), S109, 114–116 (EGQ), and Q120. The active-site Nucleophile is C50. 189–194 (GAGETG) is an NADP(+) binding site.

Belongs to the glutamyl-tRNA reductase family. In terms of assembly, homodimer.

The catalysed reaction is (S)-4-amino-5-oxopentanoate + tRNA(Glu) + NADP(+) = L-glutamyl-tRNA(Glu) + NADPH + H(+). It functions in the pathway porphyrin-containing compound metabolism; protoporphyrin-IX biosynthesis; 5-aminolevulinate from L-glutamyl-tRNA(Glu): step 1/2. It participates in porphyrin-containing compound metabolism; chlorophyll biosynthesis. Catalyzes the NADPH-dependent reduction of glutamyl-tRNA(Glu) to glutamate 1-semialdehyde (GSA). The chain is Glutamyl-tRNA reductase from Chlorobium phaeobacteroides (strain DSM 266 / SMG 266 / 2430).